Here is a 205-residue protein sequence, read N- to C-terminus: Small ribosomal subunit protein uS4 (205 aa).

Residues 1-46 form a disordered region; the sequence is MSKRHSAKYKIDRRMGENLWGRPKSPVNSRSYGPGQHGQRRKSKVS. An S4 RNA-binding domain is found at 94–154; the sequence is SRLDAIVYRA…EKSRNMALVL (61 aa).

The protein belongs to the universal ribosomal protein uS4 family. Part of the 30S ribosomal subunit. Contacts protein S5. The interaction surface between S4 and S5 is involved in control of translational fidelity.

Its function is as follows. One of the primary rRNA binding proteins, it binds directly to 16S rRNA where it nucleates assembly of the body of the 30S subunit. With S5 and S12 plays an important role in translational accuracy. The sequence is that of Small ribosomal subunit protein uS4 from Caulobacter vibrioides (strain ATCC 19089 / CIP 103742 / CB 15) (Caulobacter crescentus).